We begin with the raw amino-acid sequence, 368 residues long: Somatostatin receptor type 5 (368 aa).

The Extracellular segment spans residues 1 to 45 (MEPLFPASPLTTWNTSSVVPSGSGDENGTLAGLGPSPGARAVVVP). N-linked (GlcNAc...) asparagine glycans are attached at residues Asn-14 and Asn-27. A helical membrane pass occupies residues 46-66 (VLYLLVCAVGLGGNTLVIYVV). The Cytoplasmic portion of the chain corresponds to 67 to 77 (LRHAKMKTVTN). The helical transmembrane segment at 78–98 (IYILNLAVADVLLMLGLPFVA) threads the bilayer. The Extracellular portion of the chain corresponds to 99 to 115 (TQNAISYWPFGPVLCRL). Cys-113 and Cys-188 are joined by a disulfide. The helical transmembrane segment at 116-136 (VMTLDGINQFTSIFCLTVMSV) threads the bilayer. Over 137–158 (DRYLAVVHPIRSARWRRPRVAK) the chain is Cytoplasmic. A helical transmembrane segment spans residues 159–179 (LASAAVWAFSLVMSLPLVVFA). Over 180–207 (DIQEGWNTCNLSWPEPVGLWGAVFIIYT) the chain is Extracellular. An N-linked (GlcNAc...) asparagine glycan is attached at Asn-189. A helical transmembrane segment spans residues 208–228 (SVLGFFGPLLVICLCYLLIVV). The Cytoplasmic portion of the chain corresponds to 229-251 (KLKASGVRVGSTRRRSERKVTRM). A helical membrane pass occupies residues 252–272 (VVVVVLVFAGCWLPFFIVNIV). Over 273–286 (NLAFALPEEPASAG) the chain is Extracellular. The helical transmembrane segment at 287 to 309 (AYFFVVVLSYANSCANPLLYGFL) threads the bilayer. Over 310–368 (SDNFRQSFRKVLCLRKGYGAGAEDADATEPQPGPSSRLQEAMMPVRSCKANGLMQTSKL) the chain is Cytoplasmic. Cys-322 carries the S-palmitoyl cysteine; by ZDHHC5 lipid modification.

It belongs to the G-protein coupled receptor 1 family. In terms of assembly, heterodimer with SSTR2. Heterodimerization with SSTR2 increases cell growth inhibition activity of SSTR2. In terms of processing, palmitoylated by ZDHHC5, but not ZDHHC3, nor ZDHHC8. Palmitoylation creates an additional intracellular loop which is thought to be important for efficient coupling to G-proteins and may target the protein to lipid rafts.

The protein resides in the cell membrane. Receptor for somatostatin 28 and to a lesser extent for somatostatin-14. The activity of this receptor is mediated by G proteins which inhibit adenylyl cyclase. Increases cell growth inhibition activity of SSTR2 following heterodimerization. The sequence is that of Somatostatin receptor type 5 (SSTR5) from Bos taurus (Bovine).